An 83-amino-acid polypeptide reads, in one-letter code: Putative defensin-like protein 67 (83 aa).

The N-terminal stretch at 1-24 (MGSSKLMVTCIVVAMLTISCDILS) is a signal peptide. Intrachain disulfides connect cysteine 38-cysteine 82, cysteine 42-cysteine 65, cysteine 51-cysteine 80, and cysteine 55-cysteine 81.

This sequence belongs to the DEFL family.

Its subcellular location is the secreted. The sequence is that of Putative defensin-like protein 67 from Arabidopsis thaliana (Mouse-ear cress).